A 122-amino-acid chain; its full sequence is Large ribosomal subunit protein uL14 (122 aa).

It belongs to the universal ribosomal protein uL14 family. In terms of assembly, part of the 50S ribosomal subunit. Forms a cluster with proteins L3 and L19. In the 70S ribosome, L14 and L19 interact and together make contacts with the 16S rRNA in bridges B5 and B8.

In terms of biological role, binds to 23S rRNA. Forms part of two intersubunit bridges in the 70S ribosome. This Mycoplasmopsis agalactiae (strain NCTC 10123 / CIP 59.7 / PG2) (Mycoplasma agalactiae) protein is Large ribosomal subunit protein uL14.